We begin with the raw amino-acid sequence, 183 residues long: MACGATLKRSMEFEALMSPQSPKRRRCAPLPGSPATPSPQRCGIRPEIQQGQQQPLGGDLRLTPEQILQNIKQEYTRYQRRRQLEGAFNQGEAGVSNEVQASCSSLTAPSSPGSLVKKDQPTFSLRQVGILCERLLKDHEDKIREEYEQILNIKLAEQYESFVKFTHDQIMRRYGARPTSYVS.

Positions 14 to 43 are disordered; it reads EALMSPQSPKRRRCAPLPGSPATPSPQRCG. The SYVS motif signature appears at 180-183; sequence SYVS.

This sequence belongs to the akirin family.

Its subcellular location is the nucleus. Functionally, molecular adapter that acts as a bridge between proteins, and which is involved skeletal muscle development. Functions as a signal transducer for MSTN during skeletal muscle regeneration and myogenesis. The chain is Akirin-1B (akirin1-b) from Xenopus laevis (African clawed frog).